A 319-amino-acid chain; its full sequence is MGLNVLDFEKPILDLEEKINSLTSIVHSDKKSKKNVNAEINRLRSKSIELTQKIFSNLNAWQVAQLARHPRRPYTLDYIERIFNDFDELSGDRVYADDKAIVGGIARLNSRPVMIIGHQKGRDTKEKIKRNFGMSAPEGYRKALRLMKMAERFKIPLITFIDTPGAYPGVGAEKRGQSAAIAKNLRTMSILKIPIICTVIGEGGSGGALAISVGDKVNMLEYSTYSVISPEGCASILWKNVKKAPIAAEAMGITAYRLKELNLIDSVISEPLGGAHRDILTTSISLKTQLLLDLTELDSFDEKELLNRRYQRLMHYGYC.

Residues 39–296 (EINRLRSKSI…KTQLLLDLTE (258 aa)) enclose the CoA carboxyltransferase C-terminal domain.

The protein belongs to the AccA family. As to quaternary structure, acetyl-CoA carboxylase is a heterohexamer composed of biotin carboxyl carrier protein (AccB), biotin carboxylase (AccC) and two subunits each of ACCase subunit alpha (AccA) and ACCase subunit beta (AccD).

Its subcellular location is the cytoplasm. It carries out the reaction N(6)-carboxybiotinyl-L-lysyl-[protein] + acetyl-CoA = N(6)-biotinyl-L-lysyl-[protein] + malonyl-CoA. It functions in the pathway lipid metabolism; malonyl-CoA biosynthesis; malonyl-CoA from acetyl-CoA: step 1/1. Functionally, component of the acetyl coenzyme A carboxylase (ACC) complex. First, biotin carboxylase catalyzes the carboxylation of biotin on its carrier protein (BCCP) and then the CO(2) group is transferred by the carboxyltransferase to acetyl-CoA to form malonyl-CoA. In Blochmanniella pennsylvanica (strain BPEN), this protein is Acetyl-coenzyme A carboxylase carboxyl transferase subunit alpha.